The primary structure comprises 89 residues: Small ribosomal subunit protein uS15 (89 aa).

This sequence belongs to the universal ribosomal protein uS15 family. In terms of assembly, part of the 30S ribosomal subunit. Forms a bridge to the 50S subunit in the 70S ribosome, contacting the 23S rRNA.

Functionally, one of the primary rRNA binding proteins, it binds directly to 16S rRNA where it helps nucleate assembly of the platform of the 30S subunit by binding and bridging several RNA helices of the 16S rRNA. Its function is as follows. Forms an intersubunit bridge (bridge B4) with the 23S rRNA of the 50S subunit in the ribosome. This is Small ribosomal subunit protein uS15 from Streptococcus pneumoniae (strain P1031).